A 631-amino-acid polypeptide reads, in one-letter code: Mercuric reductase (631 aa).

2 consecutive HMA domains span residues 2–66 (KKYR…YHPG) and 81–145 (KKYR…YQPG). A metal cation-binding residues include cysteine 13, cysteine 16, cysteine 92, and cysteine 95. FAD-binding residues include alanine 181, glycine 201, and threonine 206. A disulfide bridge links cysteine 207 with cysteine 212. 3 residues coordinate FAD: lysine 216, aspartate 472, and valine 480. Hg(2+)-binding residues include cysteine 628 and cysteine 629.

The protein belongs to the class-I pyridine nucleotide-disulfide oxidoreductase family. As to quaternary structure, homodimer. The cofactor is FAD.

The enzyme catalyses Hg + NADP(+) + H(+) = Hg(2+) + NADPH. Resistance to Hg(2+) in bacteria appears to be governed by a specialized system which includes mercuric reductase. MerA protein is responsible for volatilizing mercury as Hg(0). This chain is Mercuric reductase (merA), found in Bacillus cereus.